Reading from the N-terminus, the 499-residue chain is Terpentedienyl-diphosphate synthase (499 aa).

The Mg(2+) site is built by Asp284 and Asp286. Positions 284–287 match the DXDD motif motif; sequence DGDD.

This sequence belongs to the terpene synthase family. Monomer. It depends on Mg(2+) as a cofactor.

The catalysed reaction is (2E,6E,10E)-geranylgeranyl diphosphate = terpentedienyl diphosphate. Its pathway is antibiotic biosynthesis. In terms of biological role, involved in the production of the isoprenoid antibiotic terpentecin. Converts geranylgeranyl diphosphate (GGDP) into terpentedienol diphosphate (TDP) by a protonation-initiated cyclization. In Kitasatospora griseola (Streptomyces griseolosporeus), this protein is Terpentedienyl-diphosphate synthase (cyc1).